Reading from the N-terminus, the 348-residue chain is Calcium-gated potassium channel TvoK (348 aa).

The next 3 membrane-spanning stretches (helical) occupy residues 19–39, 52–72, and 80–100; these read LTKV…LEFL, YFTA…GDVV, and VVAM…TATI. The RCK N-terminal domain occupies 120–246; sequence KNHTIICNWN…VSAGATEVLS (127 aa). The 83-residue stretch at 266–348 folds into the RCK C-terminal domain; the sequence is DFILKSLSET…KKEVEEAIKG (83 aa).

Heterooctamer composed of four full-length subunits and four soluble RCK domains.

It is found in the cell membrane. Its function is as follows. Calcium-gated potassium channel. Can also be activated by Mg(2+), Mn(2+) and Ni(2+). The protein is Calcium-gated potassium channel TvoK of Thermoplasma volcanium (strain ATCC 51530 / DSM 4299 / JCM 9571 / NBRC 15438 / GSS1).